Consider the following 472-residue polypeptide: Uronate isomerase (472 aa).

The protein belongs to the metallo-dependent hydrolases superfamily. Uronate isomerase family.

The catalysed reaction is D-glucuronate = D-fructuronate. The enzyme catalyses aldehydo-D-galacturonate = keto-D-tagaturonate. The protein operates within carbohydrate metabolism; pentose and glucuronate interconversion. In Oceanobacillus iheyensis (strain DSM 14371 / CIP 107618 / JCM 11309 / KCTC 3954 / HTE831), this protein is Uronate isomerase.